The chain runs to 1104 residues: Isoleucine--tRNA ligase (1104 aa).

A 'HIGH' region motif is present at residues 48–58 (PYTTGRIHLGT). A 'KMSKS' region motif is present at residues 644–648 (KMSKS). An ATP-binding site is contributed by lysine 647.

This sequence belongs to the class-I aminoacyl-tRNA synthetase family. IleS type 2 subfamily. As to quaternary structure, monomer. The cofactor is Zn(2+).

Its subcellular location is the cytoplasm. It carries out the reaction tRNA(Ile) + L-isoleucine + ATP = L-isoleucyl-tRNA(Ile) + AMP + diphosphate. Its function is as follows. Catalyzes the attachment of isoleucine to tRNA(Ile). As IleRS can inadvertently accommodate and process structurally similar amino acids such as valine, to avoid such errors it has two additional distinct tRNA(Ile)-dependent editing activities. One activity is designated as 'pretransfer' editing and involves the hydrolysis of activated Val-AMP. The other activity is designated 'posttransfer' editing and involves deacylation of mischarged Val-tRNA(Ile). In Methanocella arvoryzae (strain DSM 22066 / NBRC 105507 / MRE50), this protein is Isoleucine--tRNA ligase.